Here is a 259-residue protein sequence, read N- to C-terminus: Phosphatidylglycerol--prolipoprotein diacylglyceryl transferase (259 aa).

4 helical membrane passes run 9-29, 55-75, 92-112, and 117-137; these read IIFSIGPLAVSWYSLSYVVGI, FITYAVIGIIVGGRLGFVLLY, EGGMSFHGGALGVIIAAYLFC, and INFLSLTDIIAPVVPIGLFLG. Position 138 (Arg-138) interacts with a 1,2-diacyl-sn-glycero-3-phospho-(1'-sn-glycerol). 3 helical membrane-spanning segments follow: residues 172 to 192, 201 to 221, and 228 to 248; these read QLYEAFFEGLVLFCILAYATF, GLNSGIFLIFYALFRIAIEIF, and IGFILDSLTMGQILSVPMLLL.

This sequence belongs to the Lgt family.

The protein resides in the cell inner membrane. It carries out the reaction L-cysteinyl-[prolipoprotein] + a 1,2-diacyl-sn-glycero-3-phospho-(1'-sn-glycerol) = an S-1,2-diacyl-sn-glyceryl-L-cysteinyl-[prolipoprotein] + sn-glycerol 1-phosphate + H(+). The protein operates within protein modification; lipoprotein biosynthesis (diacylglyceryl transfer). Its function is as follows. Catalyzes the transfer of the diacylglyceryl group from phosphatidylglycerol to the sulfhydryl group of the N-terminal cysteine of a prolipoprotein, the first step in the formation of mature lipoproteins. The chain is Phosphatidylglycerol--prolipoprotein diacylglyceryl transferase from Rickettsia felis (strain ATCC VR-1525 / URRWXCal2) (Rickettsia azadi).